The chain runs to 276 residues: Small ribosomal subunit protein uS3 (276 aa).

A KH type-2 domain is found at 39 to 110; it reads IRRETMKFLK…KINIKIKEIK (72 aa).

This sequence belongs to the universal ribosomal protein uS3 family. In terms of assembly, part of the 30S ribosomal subunit. Forms a tight complex with proteins S10 and S14.

Binds the lower part of the 30S subunit head. Binds mRNA in the 70S ribosome, positioning it for translation. This Borrelia recurrentis (strain A1) protein is Small ribosomal subunit protein uS3.